The primary structure comprises 467 residues: Pup--protein ligase (467 aa).

Glu-12 contributes to the Mg(2+) binding site. Arg-56 contacts ATP. Tyr-58 contacts Mg(2+). The Proton acceptor role is filled by Asp-60. Glu-66 is a Mg(2+) binding site. Residues Thr-69 and Trp-431 each contribute to the ATP site.

This sequence belongs to the Pup ligase/Pup deamidase family. Pup-conjugating enzyme subfamily.

It catalyses the reaction ATP + [prokaryotic ubiquitin-like protein]-L-glutamate + [protein]-L-lysine = ADP + phosphate + N(6)-([prokaryotic ubiquitin-like protein]-gamma-L-glutamyl)-[protein]-L-lysine.. It functions in the pathway protein degradation; proteasomal Pup-dependent pathway. Its pathway is protein modification; protein pupylation. In terms of biological role, catalyzes the covalent attachment of the prokaryotic ubiquitin-like protein modifier Pup to the proteasomal substrate proteins, thereby targeting them for proteasomal degradation. This tagging system is termed pupylation. The ligation reaction involves the side-chain carboxylate of the C-terminal glutamate of Pup and the side-chain amino group of a substrate lysine. This Corynebacterium jeikeium (strain K411) protein is Pup--protein ligase.